A 175-amino-acid polypeptide reads, in one-letter code: MNNLDISFNDEVNFLKNDDKDWIPWITNLLLSAKKEINKKNAQEMSINFVSSEKIHEINKKYRGKDRPTDVISFAIEDGLDEDFMAAFNDDPDFVEDIGDLFLCPEVIKRHSVEYETGFNREFGYTLVHGYLHLNGFDHIEDDEAKVMFGIQGKVLREYGLPLHPDQENHGKQIH.

Residues His-129, His-133, and His-139 each contribute to the Zn(2+) site.

This sequence belongs to the endoribonuclease YbeY family. Zn(2+) serves as cofactor.

Its subcellular location is the cytoplasm. Its function is as follows. Single strand-specific metallo-endoribonuclease involved in late-stage 70S ribosome quality control and in maturation of the 3' terminus of the 16S rRNA. The sequence is that of Endoribonuclease YbeY from Lactobacillus gasseri (strain ATCC 33323 / DSM 20243 / BCRC 14619 / CIP 102991 / JCM 1131 / KCTC 3163 / NCIMB 11718 / NCTC 13722 / AM63).